The following is a 214-amino-acid chain: Ribosomal RNA small subunit methyltransferase G (214 aa).

Residues glycine 81, methionine 86, 132–133, and arginine 147 each bind S-adenosyl-L-methionine; that span reads AE.

This sequence belongs to the methyltransferase superfamily. RNA methyltransferase RsmG family.

It localises to the cytoplasm. The catalysed reaction is guanosine(527) in 16S rRNA + S-adenosyl-L-methionine = N(7)-methylguanosine(527) in 16S rRNA + S-adenosyl-L-homocysteine. Specifically methylates the N7 position of guanine in position 527 of 16S rRNA. This Pseudomonas syringae pv. syringae (strain B728a) protein is Ribosomal RNA small subunit methyltransferase G.